The chain runs to 1703 residues: Ferlin 2 (1703 aa).

C2 domains are found at residues 18–141 (IRKL…KTWL) and 207–332 (KQPV…FRWF). Disordered stretches follow at residues 913–937 (NQFN…FDDN), 970–1025 (NLDK…TSST), and 1194–1228 (KNKS…QKLG). A compositionally biased stretch (acidic residues) spans 916-928 (NDDDEGDNEDEQD). Over residues 979–991 (QPQSLKNLQNLDS) the composition is skewed to polar residues. Basic and acidic residues predominate over residues 993 to 1009 (SKADQKSQFDLKSESKS). A compositionally biased stretch (low complexity) spans 1198–1209 (NRSSMSLSMRSS). In terms of domain architecture, C2 3 spans 1466 to 1595 (VARIIPPSTI…LKKLKEGIVF (130 aa)). The tract at residues 1628–1651 (AAESDPVGEGQNEPNKDPILEKPK) is disordered. Over residues 1641 to 1651 (PNKDPILEKPK) the composition is skewed to basic and acidic residues. A helical membrane pass occupies residues 1681-1701 (FAGIFVSIVTMMILFVKPGIL).

It belongs to the ferlin family.

The protein resides in the membrane. Functionally, regulates mucocyst exocytosis. The polypeptide is Ferlin 2 (Tetrahymena thermophila (strain SB210)).